The chain runs to 363 residues: Homeobox protein Hox-A2a (363 aa).

Disordered stretches follow at residues 30–88, 98–117, 189–220, and 268–308; these read DSFQ…LPPE, SKRN…GPVC, RMKH…SDEE, and DKNL…LDVS. The span at 31 to 44 shows a compositional bias: polar residues; sequence SFQSSSIKSSTLSR. The short motif at 88 to 93 is the Antp-type hexapeptide element; sequence EYPWMR. The span at 103 to 113 shows a compositional bias: polar residues; the sequence is LPNSTTTTISN. Residues 137-196 constitute a DNA-binding region (homeobox); sequence SRRLRTAYTNTQLLELEKEFHFNKYLCRPRRVEIAALLDLTERQVKVWFQNRRMKHKRQT.

The protein belongs to the Antp homeobox family. Proboscipedia subfamily.

It localises to the nucleus. Sequence-specific transcription factor which is part of a developmental regulatory system that provides cells with specific positional identities on the anterior-posterior axis. In Takifugu rubripes (Japanese pufferfish), this protein is Homeobox protein Hox-A2a (hoxa2a).